The sequence spans 523 residues: GMP synthase [glutamine-hydrolyzing] (523 aa).

The 198-residue stretch at 8 to 205 folds into the Glutamine amidotransferase type-1 domain; that stretch reads KILILDFGSQ…VENICGCARS (198 aa). The Nucleophile role is filled by Cys-85. Active-site residues include His-179 and Glu-181. The region spanning 206–398 is the GMPS ATP-PPase domain; that stretch reads WTPENIIEDA…LGLPAEMLNR (193 aa). ATP is bound at residue 233 to 239; that stretch reads SGGVDSS.

In terms of assembly, homodimer.

The catalysed reaction is XMP + L-glutamine + ATP + H2O = GMP + L-glutamate + AMP + diphosphate + 2 H(+). It participates in purine metabolism; GMP biosynthesis; GMP from XMP (L-Gln route): step 1/1. Catalyzes the synthesis of GMP from XMP. The chain is GMP synthase [glutamine-hydrolyzing] from Haemophilus ducreyi (strain 35000HP / ATCC 700724).